The sequence spans 117 residues: Large ribosomal subunit protein bL19 (117 aa).

Belongs to the bacterial ribosomal protein bL19 family.

Functionally, this protein is located at the 30S-50S ribosomal subunit interface and may play a role in the structure and function of the aminoacyl-tRNA binding site. The sequence is that of Large ribosomal subunit protein bL19 from Desulfotalea psychrophila (strain LSv54 / DSM 12343).